A 343-amino-acid polypeptide reads, in one-letter code: N-acetyl-gamma-glutamyl-phosphate reductase (343 aa).

C146 is an active-site residue.

Belongs to the NAGSA dehydrogenase family. Type 1 subfamily.

The protein resides in the cytoplasm. It carries out the reaction N-acetyl-L-glutamate 5-semialdehyde + phosphate + NADP(+) = N-acetyl-L-glutamyl 5-phosphate + NADPH + H(+). The protein operates within amino-acid biosynthesis; L-arginine biosynthesis; N(2)-acetyl-L-ornithine from L-glutamate: step 3/4. Its function is as follows. Catalyzes the NADPH-dependent reduction of N-acetyl-5-glutamyl phosphate to yield N-acetyl-L-glutamate 5-semialdehyde. The protein is N-acetyl-gamma-glutamyl-phosphate reductase of Arthrobacter sp. (strain FB24).